The chain runs to 106 residues: MSTAIAQQKIRIRLKAFDRRMLDLSCDKIIETADNTAATAIGPIPLPTKRKIYCVLRSPHVDKDSREHFETRTHRRIIDIYSPSAKTIDALMKLDLPSGVDIEVKL.

Belongs to the universal ribosomal protein uS10 family. In terms of assembly, part of the 30S ribosomal subunit.

Involved in the binding of tRNA to the ribosomes. This chain is Small ribosomal subunit protein uS10, found in Synechococcus sp. (strain CC9311).